Consider the following 162-residue polypeptide: Interleukin-15 (162 aa).

The first 29 residues, 1 to 29 (MRILKPYLRSTSIQCYLCLLLNSHFLTEA), serve as a signal peptide directing secretion. The propeptide occupies 30–48 (GIHVFILGCISAGLPKTEA). Intrachain disulfides connect Cys83–Cys133 and Cys90–Cys136. Asn113, Asn121, and Asn127 each carry an N-linked (GlcNAc...) asparagine glycan.

It belongs to the IL-15/IL-21 family.

It is found in the secreted. Functionally, cytokine that plays a major role in the development of inflammatory and protective immune responses to microbial invaders and parasites by modulating immune cells of both the innate and adaptive immune systems. Stimulates the proliferation of natural killer cells, T-cells and B-cells and promotes the secretion of several cytokines. In monocytes, induces the production of IL8 and monocyte chemotactic protein 1/CCL2, two chemokines that attract neutrophils and monocytes respectively to sites of infection. Unlike most cytokines, which are secreted in soluble form, IL15 is expressed in association with its high affinity IL15RA on the surface of IL15-producing cells and delivers signals to target cells that express IL2RB and IL2RG receptor subunits. Binding to its receptor triggers the phosphorylation of JAK1 and JAK3 and the recruitment and subsequent phosphorylation of signal transducer and activator of transcription-3/STAT3 and STAT5. In mast cells, induces the rapid tyrosine phosphorylation of STAT6 and thereby controls mast cell survival and release of cytokines such as IL4. The polypeptide is Interleukin-15 (IL15) (Ovis aries (Sheep)).